The chain runs to 519 residues: Sensor protein RprX (519 aa).

The next 2 membrane-spanning stretches (helical) occupy residues 5 to 25 (TIWILGIIMGLSFLSLLYLQV) and 260 to 280 (IPSMIFTIVLLITFIFTIYIV). The region spanning 296–517 (NMTHEFKTPI…KFIIALPLLK (222 aa)) is the Histidine kinase domain. His-299 is modified (phosphohistidine; by autocatalysis).

It is found in the cell membrane. The enzyme catalyses ATP + protein L-histidine = ADP + protein N-phospho-L-histidine.. Its function is as follows. Member of the two-component regulatory system RprX/RprY. May activate RprY by phosphorylation. This chain is Sensor protein RprX (rprX), found in Bacteroides fragilis (strain YCH46).